The sequence spans 437 residues: Enolase (437 aa).

H160 and E169 together coordinate substrate. Catalysis depends on E212, which acts as the Proton donor. The Mg(2+) site is built by D247, E296, and D321. Residues E296 and D321 each coordinate substrate. K346 functions as the Proton acceptor in the catalytic mechanism. Residues 373–376 (SHRS) and K397 contribute to the substrate site.

The protein belongs to the enolase family. As to quaternary structure, homodimer. It depends on Mg(2+) as a cofactor.

Its subcellular location is the cytoplasm. The enzyme catalyses (2R)-2-phosphoglycerate = phosphoenolpyruvate + H2O. It participates in carbohydrate degradation; glycolysis; pyruvate from D-glyceraldehyde 3-phosphate: step 4/5. This is Enolase (ENO) from Eremothecium gossypii (strain ATCC 10895 / CBS 109.51 / FGSC 9923 / NRRL Y-1056) (Yeast).